Reading from the N-terminus, the 81-residue chain is Small ribosomal subunit protein bS18 (81 aa).

This sequence belongs to the bacterial ribosomal protein bS18 family. As to quaternary structure, part of the 30S ribosomal subunit. Forms a tight heterodimer with protein bS6.

In terms of biological role, binds as a heterodimer with protein bS6 to the central domain of the 16S rRNA, where it helps stabilize the platform of the 30S subunit. The protein is Small ribosomal subunit protein bS18 of Chlamydia trachomatis serovar L2 (strain ATCC VR-902B / DSM 19102 / 434/Bu).